A 319-amino-acid chain; its full sequence is Tetrahydromethanopterin S-methyltransferase subunit H (319 aa).

Belongs to the MtrH family. The complex is composed of 8 subunits; MtrA, MtrB, MtrC, MtrD, MtrE, MtrF, MtrG and MtrH.

It carries out the reaction 5-methyl-5,6,7,8-tetrahydromethanopterin + coenzyme M + 2 Na(+)(in) = 5,6,7,8-tetrahydromethanopterin + methyl-coenzyme M + 2 Na(+)(out). The protein operates within one-carbon metabolism; methanogenesis from CO(2); methyl-coenzyme M from 5,10-methylene-5,6,7,8-tetrahydromethanopterin: step 2/2. In terms of biological role, part of a complex that catalyzes the formation of methyl-coenzyme M and tetrahydromethanopterin from coenzyme M and methyl-tetrahydromethanopterin. This is an energy-conserving, sodium-ion translocating step. MtrH catalyzes the transfer of the methyl group from methyl-tetrahydromethanopterin to the corrinoid prosthetic group of MtrA. The protein is Tetrahydromethanopterin S-methyltransferase subunit H of Methanococcus maripaludis (strain DSM 14266 / JCM 13030 / NBRC 101832 / S2 / LL).